Consider the following 199-residue polypeptide: Recombination protein RecR (199 aa).

Residues 56–71 form a C4-type zinc finger; it reads CAVCGNIAEETQCRIC. The 96-residue stretch at 79 to 174 folds into the Toprim domain; sequence TVICVVEEPK…KVTRLASGLP (96 aa).

It belongs to the RecR family.

Functionally, may play a role in DNA repair. It seems to be involved in an RecBC-independent recombinational process of DNA repair. It may act with RecF and RecO. This Thermobifida fusca (strain YX) protein is Recombination protein RecR.